A 418-amino-acid chain; its full sequence is MNYLIETIGCQMNVCDSDMLVSIFSAYGASKANNLSEADVVILNTCSVRSQAEQKAFSYLGRVKEFKQKNPCIKIVVIGCMAERLGPNIKKRFSSVDLIIGAKDIGNAALKIMNLFRTDYSAKKVNSEIKSKIVRYITIMRGCDNYCSYCAVPFVRGREVSINCETIVNECSSMVKNGAREIILLGQNVNSYQYEDVNFASLIKKTAAIENLERIRFMTNHPKDLSDDLIKIMATEPKVCPHIHIPMQSASDKILKAMNRKYSYEHYLGLIKKLRTAVPDVSVTTDIIVGFPGETDEDFEDTLKAVKTIRFGGLYVFRYSPRPDTKAAEMIDDVPFEEKKRRHAVVLKESNKISIEIVSEMLGSTQQVLAEEIKNGIIKARTKNGRKVFAEGRKEYIGKHINVNIKEAKINSLFGDIV.

Residues 1-118 (MNYLIETIGC…ALKIMNLFRT (118 aa)) enclose the MTTase N-terminal domain. 6 residues coordinate [4Fe-4S] cluster: C10, C46, C80, C143, C147, and C150. The region spanning 129–356 (IKSKIVRYIT…LKESNKISIE (228 aa)) is the Radical SAM core domain. Positions 359–418 (SEMLGSTQQVLAEEIKNGIIKARTKNGRKVFAEGRKEYIGKHINVNIKEAKINSLFGDIV) constitute a TRAM domain.

This sequence belongs to the methylthiotransferase family. MiaB subfamily. In terms of assembly, monomer. The cofactor is [4Fe-4S] cluster.

It localises to the cytoplasm. The catalysed reaction is N(6)-dimethylallyladenosine(37) in tRNA + (sulfur carrier)-SH + AH2 + 2 S-adenosyl-L-methionine = 2-methylsulfanyl-N(6)-dimethylallyladenosine(37) in tRNA + (sulfur carrier)-H + 5'-deoxyadenosine + L-methionine + A + S-adenosyl-L-homocysteine + 2 H(+). Catalyzes the methylthiolation of N6-(dimethylallyl)adenosine (i(6)A), leading to the formation of 2-methylthio-N6-(dimethylallyl)adenosine (ms(2)i(6)A) at position 37 in tRNAs that read codons beginning with uridine. This is tRNA-2-methylthio-N(6)-dimethylallyladenosine synthase from Endomicrobium trichonymphae.